Here is a 419-residue protein sequence, read N- to C-terminus: Zinc metalloprotease RasP (419 aa).

The next 4 membrane-spanning stretches (helical) occupy residues 4–24, 173–193, 349–369, and 391–411; these read VIAF…GHLI, IAAG…MLGL, LAAF…PALD, and EAFV…VVTW. Zn(2+) is bound at residue His18. Glu19 is a catalytic residue. His22 is a binding site for Zn(2+). Positions 184-269 constitute a PDZ domain; the sequence is AYVILVMLGL…KLTKYVTPEA (86 aa).

This sequence belongs to the peptidase M50B family. It depends on Zn(2+) as a cofactor.

It localises to the cell membrane. Functionally, is responsible for Site-2 cleavage of the RsiW anti-sigma factor. This results, after a third proteolytic step catalyzed by the ClpXP protease, in the release of SigW and the transcription activation of the genes under the control of the sigma-W factor. This Bacillus licheniformis (strain ATCC 14580 / DSM 13 / JCM 2505 / CCUG 7422 / NBRC 12200 / NCIMB 9375 / NCTC 10341 / NRRL NRS-1264 / Gibson 46) protein is Zinc metalloprotease RasP (rasP).